Reading from the N-terminus, the 277-residue chain is Small ribosomal subunit protein uS2 (277 aa).

Residues 255 to 277 are disordered; that stretch reads AVATTDEASAPSAAATETTTEEG. A compositionally biased stretch (low complexity) spans 257-277; sequence ATTDEASAPSAAATETTTEEG.

Belongs to the universal ribosomal protein uS2 family.

This Mycobacteroides abscessus (strain ATCC 19977 / DSM 44196 / CCUG 20993 / CIP 104536 / JCM 13569 / NCTC 13031 / TMC 1543 / L948) (Mycobacterium abscessus) protein is Small ribosomal subunit protein uS2.